The chain runs to 554 residues: Phosphomethylpyrimidine synthase (554 aa).

Substrate-binding positions include Asn-188, Met-217, Tyr-246, His-282, 302–304, 343–346, and Glu-382; these read SRG and DGLR. His-386 provides a ligand contact to Zn(2+). Position 409 (Tyr-409) interacts with substrate. His-450 serves as a coordination point for Zn(2+). Cys-530, Cys-533, and Cys-538 together coordinate [4Fe-4S] cluster.

It belongs to the ThiC family. As to quaternary structure, homodimer. The cofactor is [4Fe-4S] cluster.

It carries out the reaction 5-amino-1-(5-phospho-beta-D-ribosyl)imidazole + S-adenosyl-L-methionine = 4-amino-2-methyl-5-(phosphooxymethyl)pyrimidine + CO + 5'-deoxyadenosine + formate + L-methionine + 3 H(+). It functions in the pathway cofactor biosynthesis; thiamine diphosphate biosynthesis. In terms of biological role, catalyzes the synthesis of the hydroxymethylpyrimidine phosphate (HMP-P) moiety of thiamine from aminoimidazole ribotide (AIR) in a radical S-adenosyl-L-methionine (SAM)-dependent reaction. The polypeptide is Phosphomethylpyrimidine synthase (Coxiella burnetii (strain CbuK_Q154) (Coxiella burnetii (strain Q154))).